The chain runs to 211 residues: Protein-L-isoaspartate O-methyltransferase (211 aa).

Ser-60 is an active-site residue.

The protein belongs to the methyltransferase superfamily. L-isoaspartyl/D-aspartyl protein methyltransferase family.

It localises to the cytoplasm. The catalysed reaction is [protein]-L-isoaspartate + S-adenosyl-L-methionine = [protein]-L-isoaspartate alpha-methyl ester + S-adenosyl-L-homocysteine. Functionally, catalyzes the methyl esterification of L-isoaspartyl residues in peptides and proteins that result from spontaneous decomposition of normal L-aspartyl and L-asparaginyl residues. It plays a role in the repair and/or degradation of damaged proteins. This chain is Protein-L-isoaspartate O-methyltransferase, found in Pseudomonas syringae pv. syringae (strain B728a).